Consider the following 292-residue polypeptide: NAD kinase (292 aa).

D73 (proton acceptor) is an active-site residue. NAD(+) contacts are provided by residues 73–74 (DG), 147–148 (NE), H158, R175, D177, 188–193 (TAYSLS), and Q247.

The protein belongs to the NAD kinase family. A divalent metal cation serves as cofactor.

The protein localises to the cytoplasm. The enzyme catalyses NAD(+) + ATP = ADP + NADP(+) + H(+). Functionally, involved in the regulation of the intracellular balance of NAD and NADP, and is a key enzyme in the biosynthesis of NADP. Catalyzes specifically the phosphorylation on 2'-hydroxyl of the adenosine moiety of NAD to yield NADP. In Salmonella agona (strain SL483), this protein is NAD kinase.